Here is a 451-residue protein sequence, read N- to C-terminus: Cyclin-dependent kinase 18 (451 aa).

Residues 39–61 (RNEDGRDEPGQLSPGVQYQQRQN) are disordered. Ser-51 bears the Phosphoserine mark. The segment covering 52–61 (PGVQYQQRQN) has biased composition (polar residues). Phosphoserine occurs at positions 66 and 109. Residues 121-402 (YVKLDKLGEG…AEAALSHPYF (282 aa)) form the Protein kinase domain. ATP is bound by residues 127 to 135 (LGEGTYATV) and Lys-150. Asp-242 serves as the catalytic Proton acceptor. 2 positions are modified to phosphoserine: Ser-417 and Ser-420.

This sequence belongs to the protein kinase superfamily. CMGC Ser/Thr protein kinase family. CDC2/CDKX subfamily. In brain, kidney, intestine and at a much lower level, in fetal tissues.

It carries out the reaction L-seryl-[protein] + ATP = O-phospho-L-seryl-[protein] + ADP + H(+). The enzyme catalyses L-threonyl-[protein] + ATP = O-phospho-L-threonyl-[protein] + ADP + H(+). Its function is as follows. May play a role in signal transduction cascades in terminally differentiated cells. In Rattus norvegicus (Rat), this protein is Cyclin-dependent kinase 18 (Cdk18).